Here is a 160-residue protein sequence, read N- to C-terminus: NADH-quinone oxidoreductase subunit B (160 aa).

The [4Fe-4S] cluster site is built by Cys-37, Cys-38, Cys-102, and Cys-132.

The protein belongs to the complex I 20 kDa subunit family. NDH-1 is composed of 14 different subunits. Subunits NuoB, C, D, E, F, and G constitute the peripheral sector of the complex. [4Fe-4S] cluster serves as cofactor.

It localises to the cell inner membrane. It carries out the reaction a quinone + NADH + 5 H(+)(in) = a quinol + NAD(+) + 4 H(+)(out). Its function is as follows. NDH-1 shuttles electrons from NADH, via FMN and iron-sulfur (Fe-S) centers, to quinones in the respiratory chain. Couples the redox reaction to proton translocation (for every two electrons transferred, four hydrogen ions are translocated across the cytoplasmic membrane), and thus conserves the redox energy in a proton gradient. This is NADH-quinone oxidoreductase subunit B from Cupriavidus pinatubonensis (strain JMP 134 / LMG 1197) (Cupriavidus necator (strain JMP 134)).